The sequence spans 291 residues: 4-hydroxy-tetrahydrodipicolinate synthase (291 aa).

Position 44 (T44) interacts with pyruvate. Y132 (proton donor/acceptor) is an active-site residue. The active-site Schiff-base intermediate with substrate is K160. Pyruvate is bound at residue I202.

The protein belongs to the DapA family. In terms of assembly, homotetramer; dimer of dimers.

It is found in the cytoplasm. The enzyme catalyses L-aspartate 4-semialdehyde + pyruvate = (2S,4S)-4-hydroxy-2,3,4,5-tetrahydrodipicolinate + H2O + H(+). It participates in amino-acid biosynthesis; L-lysine biosynthesis via DAP pathway; (S)-tetrahydrodipicolinate from L-aspartate: step 3/4. Catalyzes the condensation of (S)-aspartate-beta-semialdehyde [(S)-ASA] and pyruvate to 4-hydroxy-tetrahydrodipicolinate (HTPA). The protein is 4-hydroxy-tetrahydrodipicolinate synthase of Roseobacter denitrificans (strain ATCC 33942 / OCh 114) (Erythrobacter sp. (strain OCh 114)).